We begin with the raw amino-acid sequence, 328 residues long: Methionyl-tRNA formyltransferase (328 aa).

Residue 121–124 (SLLP) participates in (6S)-5,6,7,8-tetrahydrofolate binding.

Belongs to the Fmt family.

The catalysed reaction is L-methionyl-tRNA(fMet) + (6R)-10-formyltetrahydrofolate = N-formyl-L-methionyl-tRNA(fMet) + (6S)-5,6,7,8-tetrahydrofolate + H(+). Attaches a formyl group to the free amino group of methionyl-tRNA(fMet). The formyl group appears to play a dual role in the initiator identity of N-formylmethionyl-tRNA by promoting its recognition by IF2 and preventing the misappropriation of this tRNA by the elongation apparatus. This Paraburkholderia phytofirmans (strain DSM 17436 / LMG 22146 / PsJN) (Burkholderia phytofirmans) protein is Methionyl-tRNA formyltransferase.